The primary structure comprises 446 residues: Tubulin beta-8 chain (446 aa).

8 residues coordinate GTP: Gln-11, Glu-69, Ser-138, Gly-142, Thr-143, Gly-144, Asn-204, and Asn-226. Glu-69 contacts Mg(2+). Positions 426-446 are disordered; that stretch reads QDATAEDDYDEDDDAAAADEA. Acidic residues predominate over residues 429–446; the sequence is TAEDDYDEDDDAAAADEA.

This sequence belongs to the tubulin family. In terms of assembly, dimer of alpha and beta chains. A typical microtubule is a hollow water-filled tube with an outer diameter of 25 nm and an inner diameter of 15 nM. Alpha-beta heterodimers associate head-to-tail to form protofilaments running lengthwise along the microtubule wall with the beta-tubulin subunit facing the microtubule plus end conferring a structural polarity. Microtubules usually have 13 protofilaments but different protofilament numbers can be found in some organisms and specialized cells. Mg(2+) serves as cofactor. As to expression, expressed in anthers.

It is found in the cytoplasm. The protein resides in the cytoskeleton. Its function is as follows. Tubulin is the major constituent of microtubules, a cylinder consisting of laterally associated linear protofilaments composed of alpha- and beta-tubulin heterodimers. Microtubules grow by the addition of GTP-tubulin dimers to the microtubule end, where a stabilizing cap forms. Below the cap, tubulin dimers are in GDP-bound state, owing to GTPase activity of alpha-tubulin. The chain is Tubulin beta-8 chain (TUBB8) from Oryza sativa subsp. japonica (Rice).